Here is a 154-residue protein sequence, read N- to C-terminus: 3-hydroxyacyl-[acyl-carrier-protein] dehydratase FabZ (154 aa).

H60 is an active-site residue.

The protein belongs to the thioester dehydratase family. FabZ subfamily.

Its subcellular location is the cytoplasm. The catalysed reaction is a (3R)-hydroxyacyl-[ACP] = a (2E)-enoyl-[ACP] + H2O. In terms of biological role, involved in unsaturated fatty acids biosynthesis. Catalyzes the dehydration of short chain beta-hydroxyacyl-ACPs and long chain saturated and unsaturated beta-hydroxyacyl-ACPs. The sequence is that of 3-hydroxyacyl-[acyl-carrier-protein] dehydratase FabZ from Actinobacillus pleuropneumoniae serotype 5b (strain L20).